We begin with the raw amino-acid sequence, 171 residues long: Nicotinamide-nucleotide adenylyltransferase (171 aa).

Belongs to the archaeal NMN adenylyltransferase family.

The protein resides in the cytoplasm. The catalysed reaction is beta-nicotinamide D-ribonucleotide + ATP + H(+) = diphosphate + NAD(+). The protein operates within cofactor biosynthesis; NAD(+) biosynthesis; NAD(+) from nicotinamide D-ribonucleotide: step 1/1. The sequence is that of Nicotinamide-nucleotide adenylyltransferase from Methanococcus maripaludis (strain DSM 14266 / JCM 13030 / NBRC 101832 / S2 / LL).